The sequence spans 337 residues: Glucan endo-1,3-beta-glucosidase, basic isoform 1 (337 aa).

Glu-94 serves as the catalytic Proton donor. Glu-239 functions as the Nucleophile in the catalytic mechanism. The propeptide at 315–337 (VSERVWDISAETNSTASSLISEM) is removed in mature form. An N-linked (GlcNAc...) asparagine glycan is attached at Asn-327.

This sequence belongs to the glycosyl hydrolase 17 family.

Its subcellular location is the vacuole. It catalyses the reaction Hydrolysis of (1-&gt;3)-beta-D-glucosidic linkages in (1-&gt;3)-beta-D-glucans.. Is thought to be an important plant defense-related product against fungal pathogens. This chain is Glucan endo-1,3-beta-glucosidase, basic isoform 1 (GLUB1), found in Solanum tuberosum (Potato).